Reading from the N-terminus, the 1906-residue chain is Zinc metalloprotease ZmpB (1906 aa).

The signal sequence occupies residues 1–33 (MFKKDRFSIRKIKGVVGSVFLGSLLMAPSVVDA). The propeptide occupies 34 to 76 (ATYHYVNKEIISQEAKDLIQTGKPDRNEVVYGLVYQKDQLPQT). An LPXTG sorting signal motif is present at residues 73-77 (LPQTG). Residue threonine 76 is modified to Pentaglycyl murein peptidoglycan amidated threonine. A run of 2 helical transmembrane segments spans residues 77-98 (GTEASVLTAFGLLTVGSLLLIY) and 105-127 (SVFLVGAMGLVVLPSAGAVDPVA). The Extracellular portion of the chain corresponds to 128–1906 (TLALASREGV…TNSFKTSIFK (1779 aa)). The segment at 178-436 (VETPQSITNQ…KASSVSPTDY (259 aa)) is disordered. The span at 181 to 196 (PQSITNQEQARTENQV) shows a compositional bias: polar residues. Composition is skewed to basic and acidic residues over residues 201–239 (EAPKEEAPKTEESPKEEPKSEVKPTDDTLPKVEEGKEDS), 252–262 (VESKPEEKVAV), 271–335 (KPAE…KEET), 352–375 (KQTEPTEEPKVEQAGEPVAPREDE), and 383–408 (EPEKQPEVPEEEKAVEETPKPEDKIK). Repeat copies occupy residues 277–291 (KVEQAGEPVAPREDE), 293–315 (APVEPEKQPEAPEEEKAVEETPK), 361–375 (KVEQAGEPVAPREDE), and 380–402 (APVEPEKQPEVPEEEKAVEETPK). Positions 277 to 375 (KVEQAGEPVA…GEPVAPREDE (99 aa)) are 2 X 15 AA repeats of K-V-E-Q-A-G-E-P-V-A-P-R-E-D-E. Residues 293 to 375 (APVEPEKQPE…GEPVAPREDE (83 aa)) are 2 X 23 AA approximate repeats. The segment covering 421 to 436 (LNNQIDKASSVSPTDY) has biased composition (polar residues). Histidine 1562 provides a ligand contact to Zn(2+). Glutamate 1563 is an active-site residue. The Zn(2+) site is built by histidine 1566 and glutamate 1586.

This sequence belongs to the peptidase M26 family. It depends on Zn(2+) as a cofactor. Post-translationally, the Gram-positive cell-wall anchor motif LPXTG is located in the N-terminal part, in contrast to such motifs in other known streptococcal and staphylococcal proteins. The protease could be cleaved by the sortase and anchored in the membrane via the two potential N-terminal transmembrane domains, whereas the propeptide located prior to the LPXTG motif would remain attached to the cell wall peptidoglycan by an amide bond.

The protein resides in the secreted. Its subcellular location is the cell wall. It localises to the membrane. Functionally, is a virulence factor capable of inducing inflammation in the lower respiratory tract, by increasing tumor necrosis factor alpha (TNF-alpha) concentration in the lungs. Also appears to have other functions important in virulence in models of pneumonia and septicemia. In Streptococcus pneumoniae serotype 4 (strain ATCC BAA-334 / TIGR4), this protein is Zinc metalloprotease ZmpB (zmpB).